Consider the following 291-residue polypeptide: Nucleotide-binding protein PPA0813 (291 aa).

Residue 17-24 (GISGAGRR) coordinates ATP. 66-69 (DVRS) lines the GTP pocket.

The protein belongs to the RapZ-like family.

Displays ATPase and GTPase activities. The polypeptide is Nucleotide-binding protein PPA0813 (Cutibacterium acnes (strain DSM 16379 / KPA171202) (Propionibacterium acnes)).